The primary structure comprises 342 residues: MSRLTLALDVMGGDIGPRITIPASLQALEKDPMLSLLLFGDSRQIQSELDKVSDKISSDVGERLAIRHASHVIDNNQSVTEALRHSKGTSMRLAIESVQRGEAQGCVSGGNTGALMGLAKVILQPLKGIQRPALVSILPTIDGNHSVMLDLGANIDCNAENLYQFALMGAIFAENQLNLVFPRVALLNIGVEAIKGYKSIREASEMIKQNTALNYIGFIEGNYLLNGIADVIVSDGFAGNVALKTLEGAAQNVIGLLKGHSRNNVLKPLFGRLMKILFRDSYQRLRSINPEQYNGASLIGLTSVVVKSHGGAGINAFSNAVKDAALQVRQQIPQKILDGLNK.

Belongs to the PlsX family. In terms of assembly, homodimer. Probably interacts with PlsY.

It is found in the cytoplasm. The enzyme catalyses a fatty acyl-[ACP] + phosphate = an acyl phosphate + holo-[ACP]. It participates in lipid metabolism; phospholipid metabolism. Catalyzes the reversible formation of acyl-phosphate (acyl-PO(4)) from acyl-[acyl-carrier-protein] (acyl-ACP). This enzyme utilizes acyl-ACP as fatty acyl donor, but not acyl-CoA. In Actinobacillus succinogenes (strain ATCC 55618 / DSM 22257 / CCUG 43843 / 130Z), this protein is Phosphate acyltransferase.